The sequence spans 250 residues: Pyridoxine 5'-phosphate synthase (250 aa).

N11 contributes to the 3-amino-2-oxopropyl phosphate binding site. 13 to 14 (DH) contacts 1-deoxy-D-xylulose 5-phosphate. R22 contributes to the 3-amino-2-oxopropyl phosphate binding site. H47 (proton acceptor) is an active-site residue. 2 residues coordinate 1-deoxy-D-xylulose 5-phosphate: R49 and H54. The active-site Proton acceptor is E74. T104 provides a ligand contact to 1-deoxy-D-xylulose 5-phosphate. Catalysis depends on H198, which acts as the Proton donor. 3-amino-2-oxopropyl phosphate is bound by residues G199 and 220–221 (GY).

The protein belongs to the PNP synthase family. Homooctamer; tetramer of dimers.

The protein localises to the cytoplasm. The enzyme catalyses 3-amino-2-oxopropyl phosphate + 1-deoxy-D-xylulose 5-phosphate = pyridoxine 5'-phosphate + phosphate + 2 H2O + H(+). The protein operates within cofactor biosynthesis; pyridoxine 5'-phosphate biosynthesis; pyridoxine 5'-phosphate from D-erythrose 4-phosphate: step 5/5. Catalyzes the complicated ring closure reaction between the two acyclic compounds 1-deoxy-D-xylulose-5-phosphate (DXP) and 3-amino-2-oxopropyl phosphate (1-amino-acetone-3-phosphate or AAP) to form pyridoxine 5'-phosphate (PNP) and inorganic phosphate. The protein is Pyridoxine 5'-phosphate synthase of Bradyrhizobium diazoefficiens (strain JCM 10833 / BCRC 13528 / IAM 13628 / NBRC 14792 / USDA 110).